The following is a 357-amino-acid chain: Peptide chain release factor 1 (357 aa).

At glutamine 235 the chain carries N5-methylglutamine. Over residues arginine 282–arginine 294 the composition is skewed to basic and acidic residues. Positions arginine 282–threonine 308 are disordered.

The protein belongs to the prokaryotic/mitochondrial release factor family. In terms of processing, methylated by PrmC. Methylation increases the termination efficiency of RF1.

The protein localises to the cytoplasm. Its function is as follows. Peptide chain release factor 1 directs the termination of translation in response to the peptide chain termination codons UAG and UAA. This chain is Peptide chain release factor 1, found in Brucella anthropi (strain ATCC 49188 / DSM 6882 / CCUG 24695 / JCM 21032 / LMG 3331 / NBRC 15819 / NCTC 12168 / Alc 37) (Ochrobactrum anthropi).